Consider the following 469-residue polypeptide: 24-hydroxycholesterol 7-alpha-hydroxylase (469 aa).

The first 23 residues, 1 to 23, serve as a signal peptide directing secretion; that stretch reads MELISPTVIIILGCLALFLLLQR. 3 consecutive transmembrane segments (helical) span residues 267 to 287, 352 to 372, and 412 to 432; these read GLLLLWASLSNAVPVAFWTLA, VEILNYIIPSGDLLMLSPFWL, and FQCPARWFALLEVQMCIILIL. C414 is a heme binding site.

The protein belongs to the cytochrome P450 family. Heme serves as cofactor. In terms of tissue distribution, liver specific.

It is found in the endoplasmic reticulum membrane. The protein localises to the microsome membrane. The enzyme catalyses (24S)-hydroxycholesterol + reduced [NADPH--hemoprotein reductase] + O2 = (24S)-7alpha-dihydroxycholesterol + oxidized [NADPH--hemoprotein reductase] + H2O + H(+). It participates in steroid metabolism; cholesterol degradation. Its pathway is lipid metabolism; bile acid biosynthesis. A cytochrome P450 monooxygenase involved in neural cholesterol clearance through bile acid synthesis. Catalyzes 7-alpha hydroxylation of (24S)-hydroxycholesterol, a neural oxysterol that is metabolized to bile acids in the liver. Mechanistically, uses molecular oxygen inserting one oxygen atom into a substrate, and reducing the second into a water molecule, with two electrons provided by NADPH via cytochrome P450 reductase (CPR; NADPH-ferrihemoprotein reductase). The sequence is that of 24-hydroxycholesterol 7-alpha-hydroxylase from Homo sapiens (Human).